Consider the following 372-residue polypeptide: Dual-specificity RNA methyltransferase RlmN (372 aa).

Glu94 serves as the catalytic Proton acceptor. The Radical SAM core domain occupies 100-339; the sequence is DGDRATLCVS…VTIRKTRGDD (240 aa). Residues Cys107 and Cys344 are joined by a disulfide bond. Residues Cys114, Cys118, and Cys121 each contribute to the [4Fe-4S] cluster site. S-adenosyl-L-methionine is bound by residues 168-169, Ser200, 222-224, and Asn301; these read GE and SLH. The S-methylcysteine intermediate role is filled by Cys344.

This sequence belongs to the radical SAM superfamily. RlmN family. It depends on [4Fe-4S] cluster as a cofactor.

The protein resides in the cytoplasm. It catalyses the reaction adenosine(2503) in 23S rRNA + 2 reduced [2Fe-2S]-[ferredoxin] + 2 S-adenosyl-L-methionine = 2-methyladenosine(2503) in 23S rRNA + 5'-deoxyadenosine + L-methionine + 2 oxidized [2Fe-2S]-[ferredoxin] + S-adenosyl-L-homocysteine. The catalysed reaction is adenosine(37) in tRNA + 2 reduced [2Fe-2S]-[ferredoxin] + 2 S-adenosyl-L-methionine = 2-methyladenosine(37) in tRNA + 5'-deoxyadenosine + L-methionine + 2 oxidized [2Fe-2S]-[ferredoxin] + S-adenosyl-L-homocysteine. Functionally, specifically methylates position 2 of adenine 2503 in 23S rRNA and position 2 of adenine 37 in tRNAs. m2A2503 modification seems to play a crucial role in the proofreading step occurring at the peptidyl transferase center and thus would serve to optimize ribosomal fidelity. This chain is Dual-specificity RNA methyltransferase RlmN, found in Aliivibrio fischeri (strain ATCC 700601 / ES114) (Vibrio fischeri).